The following is a 529-amino-acid chain: Probable alpha-galactosidase A (529 aa).

Positions 1–19 (MKALFAAITMAHALLQTQA) are cleaved as a signal peptide. Cys-42 and Cys-74 are oxidised to a cystine. Asn-45, Asn-83, Asn-89, and Asn-119 each carry an N-linked (GlcNAc...) asparagine glycan. A disulfide bond links Cys-122 and Cys-152. The active-site Nucleophile is Asp-150. Asn-199 is a glycosylation site (N-linked (GlcNAc...) asparagine). The active-site Proton donor is Asp-208. Asn-351 carries N-linked (GlcNAc...) asparagine glycosylation. The region spanning 408 to 528 (RVDAVSTGIV…GLPSGVRVSG (121 aa)) is the Ricin B-type lectin domain. Cystine bridges form between Cys-425-Cys-438 and Cys-462-Cys-475.

It belongs to the glycosyl hydrolase 27 family.

It is found in the secreted. The catalysed reaction is Hydrolysis of terminal, non-reducing alpha-D-galactose residues in alpha-D-galactosides, including galactose oligosaccharides, galactomannans and galactolipids.. In terms of biological role, hydrolyzes a variety of simple alpha-D-galactoside as well as more complex molecules such as oligosaccharides and polysaccharides. The protein is Probable alpha-galactosidase A (aglA) of Aspergillus terreus (strain NIH 2624 / FGSC A1156).